A 1967-amino-acid polypeptide reads, in one-letter code: RNA replication polyprotein (1967 aa).

Residues 63–252 (SPYAGFPHSH…YEQPLSGGYL (190 aa)) enclose the Alphavirus-like MT domain. In terms of domain architecture, Fe2OG dioxygenase spans 750–841 (TYDCMLAQRY…RVSYTFRRLA (92 aa)). Residues His768, Asp770, and His823 each contribute to the Fe cation site. Arg832 lines the 2-oxoglutarate pocket. The region spanning 884-991 (FNVQCVPGDG…GSHFEPLEPK (108 aa)) is the OTU domain. Residues 990–1080 (PKEMCVVKAI…MTTDHLSYDG (91 aa)) enclose the Peptidase C23 domain. Active-site residues include Cys994 and His1075. The (+)RNA virus helicase ATP-binding domain occupies 1133 to 1308 (GSTGVMCSEL…DGIEYKFNIL (176 aa)). 1166–1173 (GTFGCGKS) is a binding site for ATP. The region spanning 1309 to 1455 (SRRFQSSLFR…SARQEDLRRM (147 aa)) is the (+)RNA virus helicase C-terminal domain. The 108-residue stretch at 1748 to 1855 (GVCTESDYEA…NGRLHVSSKH (108 aa)) folds into the RdRp catalytic domain.

Belongs to the potexviruses/carlaviruses RNA replication protein family. The cofactor is Fe(2+). Specific enzymatic cleavages by the viral protease yield mature proteins.

The catalysed reaction is ATP + H2O = ADP + phosphate + H(+). The enzyme catalyses RNA(n) + a ribonucleoside 5'-triphosphate = RNA(n+1) + diphosphate. In terms of biological role, RNA-directed RNA polymerase involved in viral RNA replication. Functionally, protease: Thiol protease that cleaves the polyprotein. The protein is RNA replication polyprotein of Vaccinium corymbosum (Highbush blueberry).